The chain runs to 208 residues: MSAGGDFGNPLRKFKLVFLGEQSVGKTSLITRFMYDSFDNTYQATIGIDFLSKTMYLEDRTVRLQLWDTAGQERFRSLIPSYIRDSTVAVVVYDITNVNSFQQTTKWIDDVRTERGSDVIIMLVGNKTDLADKRQVSIEEGERKAKELNVMFIETSAKAGYNVKQLFRRVAAALPGMESTQDRSREDMIDIKLEKPQEQPVNEGGCSC.

Ser-2 carries the post-translational modification N-acetylserine. GTP contacts are provided by Ser-23, Val-24, Gly-25, Lys-26, Thr-27, Ser-28, Asp-39, Asn-40, Tyr-42, and Thr-45. Thr-27 provides a ligand contact to Mg(2+). The Switch 1 signature appears at 32–50; the sequence is RFMYDSFDNTYQATIGIDF. Mg(2+) contacts are provided by Thr-45 and Asp-68. The short motif at 69-88 is the Switch 2 element; it reads TAGQERFRSLIPSYIRDSTV. The GTP site is built by Gly-71, Asn-126, Lys-127, Asp-129, Ser-156, Ala-157, and Lys-158. Phosphoserine is present on Ser-184. 2 S-geranylgeranyl cysteine lipidation sites follow: Cys-206 and Cys-208. Cys-208 bears the Cysteine methyl ester mark.

The protein belongs to the small GTPase superfamily. Rab family. In terms of assembly, interacts with BICDL1; leads to its accumulation in the pericentrosomal region. Interacts with SCYL1BP1. Interacts with VSP52. Interacts with RABGAP1. Interacts with GCC2 (via its GRIP domain). Interacts with RAB6IP1 (via its RUN 1 domain). Interacts with TMF1. Interacts with CIMAP3. Interacts (GTP-bound) with APBA1/MINT1 isoform 3, also called Mint1_826, but not with isoform 1. Interacts with RIC1; the interaction is direct with a preference for RAB6A-GDP. Interacts with RGP1; the interaction is direct with a preference for RAB6A-GDP. Interacts (GTP-bound) with DYNLRB1; the interaction is direct. Interacts with BICD1. Interacts with BICD2; the interaction is direct. Interacts (GTP-bound) with VPS13B. As to quaternary structure, interacts with BICD1. Interacts (GDP-bound) with DYNLRB1; the interaction is direct. Interacts (GTP-bound) with VPS13B. It depends on Mg(2+) as a cofactor. Prenylated.

It localises to the golgi apparatus membrane. Its subcellular location is the cytoplasmic vesicle. The protein resides in the secretory vesicle. It is found in the acrosome membrane. It catalyses the reaction GTP + H2O = GDP + phosphate + H(+). Its activity is regulated as follows. Regulated by guanine nucleotide exchange factors (GEFs) which promote the exchange of bound GDP for free GTP. Regulated by GTPase activating proteins (GAPs) which increase the GTP hydrolysis activity. Inhibited by GDP dissociation inhibitors (GDIs). The small GTPases Rab are key regulators of intracellular membrane trafficking, from the formation of transport vesicles to their fusion with membranes. Rabs cycle between an inactive GDP-bound form and an active GTP-bound form that is able to recruit to membranes different sets of downstream effectors directly responsible for vesicle formation, movement, tethering and fusion. RAB6A acts as a regulator of COPI-independent retrograde transport from the Golgi apparatus towards the endoplasmic reticulum (ER). Has a low GTPase activity. Recruits VPS13B to the Golgi membrane. Plays a role in neuron projection development. In Mus musculus (Mouse), this protein is Ras-related protein Rab-6A.